A 472-amino-acid polypeptide reads, in one-letter code: 3-isopropylmalate dehydratase large subunit (472 aa).

The [4Fe-4S] cluster site is built by C353, C414, and C417.

The protein belongs to the aconitase/IPM isomerase family. LeuC type 1 subfamily. As to quaternary structure, heterodimer of LeuC and LeuD. It depends on [4Fe-4S] cluster as a cofactor.

The catalysed reaction is (2R,3S)-3-isopropylmalate = (2S)-2-isopropylmalate. The protein operates within amino-acid biosynthesis; L-leucine biosynthesis; L-leucine from 3-methyl-2-oxobutanoate: step 2/4. Catalyzes the isomerization between 2-isopropylmalate and 3-isopropylmalate, via the formation of 2-isopropylmaleate. This Acinetobacter baumannii (strain AB0057) protein is 3-isopropylmalate dehydratase large subunit.